Consider the following 772-residue polypeptide: Elongin-A (772 aa).

The 76-residue stretch at 4-79 (ESALQVVEKL…AQWKKLVPVE (76 aa)) folds into the TFIIS N-terminal domain. Basic and acidic residues-rich tracts occupy residues 79–105 (ERNA…LQKE) and 136–156 (LSEL…DERK). Disordered stretches follow at residues 79–403 (ERNA…FEQP) and 418–466 (KKKK…EKPA). Phosphoserine is present on Ser-196. Basic and acidic residues-rich tracts occupy residues 226 to 235 (QERHLGEPHG), 253 to 269 (RPVD…VSRE), 275 to 308 (LSKE…EGSS), 321 to 343 (SDNH…KSKQ), and 372 to 384 (PEGK…DRKS). Ser-384 and Ser-387 each carry phosphoserine. At Thr-394 the chain carries Phosphothreonine. Residue Lys-434 is modified to N6-acetyllysine. The span at 434–443 (KGLKKNDSKS) shows a compositional bias: basic and acidic residues. Ser-516 is subject to Phosphoserine. Residues 522–681 (EAGFTGRRMN…PPRDVRRRQE (160 aa)) are activation domain. A BC-box region spans residues 550-559 (TLHQQCIRVL). Residues 566 to 610 (IFEVGGVPYSVLEPVLERCTPDQLYRIEEYNHVLIEETDQLWKVH) enclose the F-box domain. The segment at 674-732 (RDVRRRQEKFGTGGAAVPEKIKIKPAPYPMGSSHASASSISFNPSPEEPAYDGPSTSSA) is disordered. Positions 705–714 (SSHASASSIS) are enriched in low complexity.

In terms of assembly, heterotrimer of an A (ELOA, ELOA2 or ELOA3P), ELOB and ELOC subunit. Part of a multisubunit ubiquitin ligase complex consisting of elongin BC complex (ELOB and ELOC), elongin A/ELOA, RBX1 and CUL5. Interacts with ERCC6; the interaction is induced by DNA damaging agents or inhibitors of RNA polymerase II elongation. Interacts (via BC-box) with CUL5.

It localises to the nucleus. Functionally, SIII, also known as elongin, is a general transcription elongation factor that increases the RNA polymerase II transcription elongation past template-encoded arresting sites. Subunit A is transcriptionally active and its transcription activity is strongly enhanced by binding to the dimeric complex of the SIII regulatory subunits B and C (elongin BC complex). Its function is as follows. As part of a multisubunit complex composed of elongin BC complex (ELOB and ELOC), elongin A/ELOA, RBX1 and CUL5; polyubiquitinates monoubiquitinated POLR2A. The protein is Elongin-A of Homo sapiens (Human).